A 902-amino-acid chain; its full sequence is Tiger protein B1 (902 aa).

Residues 1–24 form the signal peptide; it reads MKVIYIYLLLLLVCKFLFVKSSCS. The Extracellular segment spans residues 25–803; it reads LKVGKIECTK…IIYSENKSTG (779 aa). Residues N43, N144, N184, N223, N272, N279, N288, N358, N389, N398, N437, N559, N628, N644, N706, N753, N764, N771, and N799 are each glycosylated (N-linked (GlcNAc...) asparagine). An IPT/TIG 1 domain is found at 249-323; the sequence is MEGVLNDNGG…ITIDGEYKSN (75 aa). IPT/TIG domains follow at residues 603-680 and 704-788; these read PIIE…ISSS and ITNT…IFQF. Residues 804–824 traverse the membrane as a helical segment; that stretch reads FPNEMYLGFVVFVIFIALISF. Residues 825–902 are Cytoplasmic-facing; that stretch reads AAKNQIEKYF…IRRCFKEHTD (78 aa).

The protein localises to the cell membrane. Functionally, tgrB1 and tgrC1 are involved in kin discrimination. They play an essential role in aggregation and subsequent development. The protein is Tiger protein B1 (tgrB1) of Dictyostelium discoideum (Social amoeba).